We begin with the raw amino-acid sequence, 533 residues long: Na(+)/H(+) antiporter NhaB (533 aa).

The next 10 membrane-spanning stretches (helical) occupy residues 28–50 (FLII…VLVL), 67–87 (PGGL…SQVL), 96–116 (VLLL…LLLF), 131–165 (VSLM…FYSI), 254–274 (VPVL…GIFG), 316–336 (LIAG…SVII), 364–384 (LAVF…APVI), 396–416 (LVIF…VFVG), 454–474 (ATPN…APLI), and 481–501 (MVWM…MAIQ).

This sequence belongs to the NhaB Na(+)/H(+) (TC 2.A.34) antiporter family.

The protein resides in the cell inner membrane. The catalysed reaction is 2 Na(+)(in) + 3 H(+)(out) = 2 Na(+)(out) + 3 H(+)(in). Functionally, na(+)/H(+) antiporter that extrudes sodium in exchange for external protons. This is Na(+)/H(+) antiporter NhaB from Shewanella baltica (strain OS195).